The chain runs to 648 residues: PAN2-PAN3 deadenylation complex subunit PAN3 (648 aa).

Residues 1-24 (MAATRYPPNDLRRQVGSPRSKGRE) form a disordered region. The C3H1-type zinc finger occupies 24–53 (ENKDTLCRNILIYGNCRYEDQGCTFNHDQN). The segment at 244–506 (QVMPNSGLPQ…SIENFISGIA (263 aa)) is pseudokinase domain. Residues R295, 345 to 352 (DYHPLSKT), and 404 to 405 (SK) each bind ATP. The stretch at 507–545 (THMTAFFDLALQDGDEKQFHLARELENGRIARSMMKLMT) forms a coiled coil. The segment at 546-648 (IIERAEPGGA…SKTGAPGANN (103 aa)) is knob domain.

It belongs to the protein kinase superfamily. PAN3 family. Homodimer. Forms a heterotrimer with a catalytic subunit PAN2 to form the poly(A)-nuclease (PAN) deadenylation complex. Interacts (via PAM-2 motif) with poly(A)-binding protein PAB1 (via PABC domain), conferring substrate specificity of the enzyme complex.

It is found in the cytoplasm. Functionally, regulatory subunit of the poly(A)-nuclease (PAN) deadenylation complex, one of two cytoplasmic mRNA deadenylases involved in mRNA turnover. PAN specifically shortens poly(A) tails of RNA and the activity is stimulated by poly(A)-binding protein PAB1. PAN deadenylation is followed by rapid degradation of the shortened mRNA tails by the CCR4-NOT complex. Deadenylated mRNAs are then degraded by two alternative mechanisms, namely exosome-mediated 3'-5' exonucleolytic degradation, or deadenylation-dependent mRNA decaping and subsequent 5'-3' exonucleolytic degradation by XRN1. May also be involved in post-transcriptional maturation of mRNA poly(A) tails. PAN3 acts as a positive regulator for PAN activity, recruiting the catalytic subunit PAN2 to mRNA via its interaction with RNA and with PAB1. The sequence is that of PAN2-PAN3 deadenylation complex subunit PAN3 from Chaetomium globosum (strain ATCC 6205 / CBS 148.51 / DSM 1962 / NBRC 6347 / NRRL 1970) (Soil fungus).